Here is a 206-residue protein sequence, read N- to C-terminus: Urease accessory protein UreG (206 aa).

Residue 14-21 participates in GTP binding; the sequence is GPVGSGKT.

Belongs to the SIMIBI class G3E GTPase family. UreG subfamily. In terms of assembly, homodimer. UreD, UreF and UreG form a complex that acts as a GTP-hydrolysis-dependent molecular chaperone, activating the urease apoprotein by helping to assemble the nickel containing metallocenter of UreC. The UreE protein probably delivers the nickel.

The protein resides in the cytoplasm. Facilitates the functional incorporation of the urease nickel metallocenter. This process requires GTP hydrolysis, probably effectuated by UreG. The protein is Urease accessory protein UreG of Methylocella silvestris (strain DSM 15510 / CIP 108128 / LMG 27833 / NCIMB 13906 / BL2).